Here is a 352-residue protein sequence, read N- to C-terminus: Membrane progestin receptor alpha (352 aa).

Residues 1–75 are Cytoplasmic-facing; the sequence is MATVVMEQIG…FLTLFQRHNE (75 aa). The chain crosses the membrane as a helical span at residues 76–96; the sequence is TLNVWTHLLAAFIILVKWQEI. The Extracellular segment spans residues 97–110; sequence SETVDFLRDPHAQP. Residues 111-131 form a helical membrane-spanning segment; that stretch reads LFIVLLAAFTYLSFSALAHLL. Topologically, residues 132–139 are cytoplasmic; it reads SAKSELSY. Residues 140–160 form a helical membrane-spanning segment; sequence YTFYFLDYVGVAVYQYGSALA. Residues 161–175 are Extracellular-facing; that stretch reads HYYYAIEKEWHTKVQ. The helical transmembrane segment at 176–196 threads the bilayer; sequence GLFLPAAAFLAWLTCFGCCYG. The Cytoplasmic portion of the chain corresponds to 197–242; it reads KYASPELPKVANKLFQVVPSALAYCLDISPVVHRIYSCYQEGCSDP. The chain crosses the membrane as a helical span at residues 243-263; sequence VVAYHFYHVVFFLIGAYFFCC. At 264 to 275 the chain is on the extracellular side; it reads PHPESLFPGKCD. The helical transmembrane segment at 276–296 threads the bilayer; that stretch reads FIGQGHQLFHVFVVVCTLTQV. Topologically, residues 297–316 are cytoplasmic; sequence EALRTDFTERRPFYERLHGD. The helical transmembrane segment at 317–337 threads the bilayer; it reads LAHDAVALFIFTACCSALTAF. At 338-352 the chain is on the extracellular side; sequence YVRQRVRASLHEKGE.

It belongs to the ADIPOR family. As to expression, strongly expressed in ovary and brain; lower expression in testis and pituitary. Not detected in heart, kidney, spleen, intestine, gill and muscle.

The protein localises to the cell membrane. Steroid membrane receptor. Binds progesterone, progestin and 17-hydroxyprogesterone in vitro. Capable of mediating progestin-induced oocyte maturation. This chain is Membrane progestin receptor alpha (mpra), found in Cynoscion nebulosus (Spotted seatrout).